The following is a 365-amino-acid chain: Iron-sulfur cluster assembly protein SufC (365 aa).

Residues 118–364 (LEINDLHAIE…ESDGYAQFVE (247 aa)) form the ABC transporter domain. 152 to 159 (GRNGSGKS) is a binding site for ATP.

It belongs to the ABC transporter superfamily. Ycf16 family. In terms of assembly, component of a complex composed of SufB, SufC and SufD in a stoichiometric ratio of 1:2:1. Interacts with SufB. Interacts with SufD; the interaction enhances the ATPase activity of SufC.

The protein localises to the plastid. Its subcellular location is the apicoplast. The enzyme catalyses ATP + H2O = ADP + phosphate + H(+). It functions in the pathway cofactor biosynthesis; iron-sulfur cluster biosynthesis. Its function is as follows. Participates in the sulfur mobilization (SUF) pathway for iron-sulfur (Fe-S) cluster biogenesis. As part of a complex consisting of SufB-SufC(2)-SufD, involved in assembly of [4Fe-4S] clusters. Exhibits ATPase activity. The chain is Iron-sulfur cluster assembly protein SufC from Plasmodium berghei (strain Anka).